Reading from the N-terminus, the 266-residue chain is MTGSIWAIVPAAGRGTRFGGPLPKQYLQAGGQPLMAYTLAALAAHPALAGIMVAIAPGDADWPGWTAVQSKPVLTCLGGATRAASVLSGLLALPESVRADDFVLVHDAARPNLALADLDRLLEIGRGDPVGAILAAPVRDTLKRAGDDGGIDGTEPRERLWRALTPQLFRRHQLIRGLTEASAAGVEVTDEAMAMERIGLRPLLVEGAEDNFKVTTPADLARFEFELANRDCGPGTRDPESAHPQSSVSASAFSGPGSRAPGPEEI.

A disordered region spans residues 229–266 (NRDCGPGTRDPESAHPQSSVSASAFSGPGSRAPGPEEI). Polar residues predominate over residues 243-252 (HPQSSVSASA).

The protein belongs to the IspD/TarI cytidylyltransferase family. IspD subfamily.

The enzyme catalyses 2-C-methyl-D-erythritol 4-phosphate + CTP + H(+) = 4-CDP-2-C-methyl-D-erythritol + diphosphate. It participates in isoprenoid biosynthesis; isopentenyl diphosphate biosynthesis via DXP pathway; isopentenyl diphosphate from 1-deoxy-D-xylulose 5-phosphate: step 2/6. Catalyzes the formation of 4-diphosphocytidyl-2-C-methyl-D-erythritol from CTP and 2-C-methyl-D-erythritol 4-phosphate (MEP). The polypeptide is 2-C-methyl-D-erythritol 4-phosphate cytidylyltransferase (Xanthomonas axonopodis pv. citri (strain 306)).